Here is a 182-residue protein sequence, read N- to C-terminus: UPF0301 protein NMB1336 (182 aa).

This sequence belongs to the UPF0301 (AlgH) family.

The protein is UPF0301 protein NMB1336 of Neisseria meningitidis serogroup B (strain ATCC BAA-335 / MC58).